A 793-amino-acid polypeptide reads, in one-letter code: MKVSKLWLREWVNFSLTEQELAEQLTMAGLEVDAVNPVAGQFTHVIVAEVLNTKPHPDADKLTLCEVNINKDKPLKIVCGAANVRPGLRVALAMIGAHLPGGLQIKESKLRGELSQGMLCSATELGLAEHSEGIMELSDEAPIGMDLREYLALDDHVFDIDLTPNRADCFSILGVAREVAVLNKLPLIEQPIVTVAPAIDDGLRVNLIHSEACPRYCGRIIRNLNLEAKTPLWMAERLRRGGIRTLHPVVDVMNYVMLELGQPMHAFDLAKINGEINVRYSASGEQLELLDGQEVVLNDNVLVIADKEKPLAMAGIMGGANSAVQELTQHVFLESAYFNPVTIAGVARKYGLFSDSSQRFERGVDPCLQSKALERATELILSISGGEPGPVIESFDKKFLPGTVSFLFDTTKVKKLTGLSIPLNEMKNLLEGLGVVITKETNHFFEVTIPSHRVDLQQDADLVEEIIRLYGYDKLQAQPMQTSVQAGLISAKEKIATHVSSWFSAKGYHETISYSFVDPELQEALYPQKEFMELLNPISSELSQMRAGMWPGLIASMIYNSHRQQTAVKFFEIGVVFDLDGGQLKERSCIAGLLMGEQGNLNWSESARLFDFYDLKGDLQSLFASLKLNDVEFIQSSHHALHPGQSAQIVINGKHSGWIGVLHPRLSDAFDLDQDVVLFELNLESLINPTIPLYKPISKYPQIRRDLSFLVDRQISAMQIERVIRNTVKEDWLKSFDVFDVYMGKGIPEDKKSIAVAMTLQDDTRTLVDAEINLTISAIIKKLENEFSILLRE.

A tRNA-binding domain is found at 39 to 148 (AGQFTHVIVA…DEAPIGMDLR (110 aa)). The region spanning 401 to 477 (PGTVSFLFDT…RLYGYDKLQA (77 aa)) is the B5 domain. Residues Asp-455, Asp-461, Glu-464, and Glu-465 each coordinate Mg(2+). Positions 698 to 792 (SKYPQIRRDL…LENEFSILLR (95 aa)) constitute an FDX-ACB domain.

The protein belongs to the phenylalanyl-tRNA synthetase beta subunit family. Type 1 subfamily. In terms of assembly, tetramer of two alpha and two beta subunits. Mg(2+) serves as cofactor.

It is found in the cytoplasm. It catalyses the reaction tRNA(Phe) + L-phenylalanine + ATP = L-phenylalanyl-tRNA(Phe) + AMP + diphosphate + H(+). The protein is Phenylalanine--tRNA ligase beta subunit of Legionella pneumophila (strain Paris).